The sequence spans 277 residues: MTIRLYKAYTPGTRNRSVLGFKELVKTNPQKKLTFWQHNKQGRNNRGVITSRFRGGGHKRLYRQIDFRRNKKNISGKITTIEYDPNRTANICLVHYEDGEKRYILHPRGLKVGDTIISSNEAPILIGNALPLTNMPLGTAIHNIEITPGKGGQLVKSAGAVAKLIAKEGQLATLRLPSGEVRLVSQNSLATIGQIGNVDANNKTIGKAGAKRWLGKRPRVRGVVMNPIDHPHGGGEGRAPIGREKPLTPWGRTALGKRTRKIKKYSNPLILRRRKNG.

Residues 226 to 249 (NPIDHPHGGGEGRAPIGREKPLTP) are disordered. The span at 229–246 (DHPHGGGEGRAPIGREKP) shows a compositional bias: basic and acidic residues.

It belongs to the universal ribosomal protein uL2 family. In terms of assembly, part of the 50S ribosomal subunit.

It localises to the plastid. It is found in the chloroplast. The sequence is that of Large ribosomal subunit protein uL2c (rpl2) from Physcomitrium patens (Spreading-leaved earth moss).